Consider the following 234-residue polypeptide: Homeobox protein ceh-51 (234 aa).

2 disordered regions span residues 128–154 (PPSF…RTPF) and 209–234 (QIKQ…HVIS). The segment at residues 147-206 (RRGARTPFSDSQLYALRTRFEQCDTIKVDERRKLGAVIGLSPEQIKIWFQNRRFKLRKEK) is a DNA-binding region (homeobox). Residues 220 to 234 (SAKEEAEEDQKHVIS) are compositionally biased toward basic and acidic residues.

It belongs to the NK-2 homeobox family.

Its subcellular location is the nucleus. Functionally, required for mesoderm development, including specification of muscle and coelomocyte precursors. In Caenorhabditis elegans, this protein is Homeobox protein ceh-51.